The following is a 455-amino-acid chain: Bifunctional protein GlmU (455 aa).

Residues 1-226 are pyrophosphorylase; that stretch reads MGLSVVILAA…EFEILGVNDR (226 aa). UDP-N-acetyl-alpha-D-glucosamine contacts are provided by residues 8–11, Lys-22, Gln-73, 78–79, 99–101, Gly-136, Glu-151, Asn-166, and Asn-224; these read LAAG, GT, and YGD. Asp-101 serves as a coordination point for Mg(2+). Asn-224 serves as a coordination point for Mg(2+). The interval 227–247 is linker; that stretch reads TQLASLERVWQRNVAEKIMAK. The tract at residues 248 to 455 is N-acetyltransferase; the sequence is GVSIADPNRF…WQRSVKKTDK (208 aa). Residues Arg-330 and Lys-348 each coordinate UDP-N-acetyl-alpha-D-glucosamine. The active-site Proton acceptor is the His-360. The UDP-N-acetyl-alpha-D-glucosamine site is built by Tyr-363 and Asn-374. Acetyl-CoA-binding positions include Ala-377, 383–384, Ser-402, Ala-420, and Arg-437; that span reads NY.

It in the N-terminal section; belongs to the N-acetylglucosamine-1-phosphate uridyltransferase family. In the C-terminal section; belongs to the transferase hexapeptide repeat family. Homotrimer. It depends on Mg(2+) as a cofactor.

It is found in the cytoplasm. It carries out the reaction alpha-D-glucosamine 1-phosphate + acetyl-CoA = N-acetyl-alpha-D-glucosamine 1-phosphate + CoA + H(+). It catalyses the reaction N-acetyl-alpha-D-glucosamine 1-phosphate + UTP + H(+) = UDP-N-acetyl-alpha-D-glucosamine + diphosphate. Its pathway is nucleotide-sugar biosynthesis; UDP-N-acetyl-alpha-D-glucosamine biosynthesis; N-acetyl-alpha-D-glucosamine 1-phosphate from alpha-D-glucosamine 6-phosphate (route II): step 2/2. The protein operates within nucleotide-sugar biosynthesis; UDP-N-acetyl-alpha-D-glucosamine biosynthesis; UDP-N-acetyl-alpha-D-glucosamine from N-acetyl-alpha-D-glucosamine 1-phosphate: step 1/1. It functions in the pathway bacterial outer membrane biogenesis; LPS lipid A biosynthesis. Functionally, catalyzes the last two sequential reactions in the de novo biosynthetic pathway for UDP-N-acetylglucosamine (UDP-GlcNAc). The C-terminal domain catalyzes the transfer of acetyl group from acetyl coenzyme A to glucosamine-1-phosphate (GlcN-1-P) to produce N-acetylglucosamine-1-phosphate (GlcNAc-1-P), which is converted into UDP-GlcNAc by the transfer of uridine 5-monophosphate (from uridine 5-triphosphate), a reaction catalyzed by the N-terminal domain. The chain is Bifunctional protein GlmU from Francisella tularensis subsp. tularensis (strain FSC 198).